The sequence spans 240 residues: tRNA (guanine-N(1)-)-methyltransferase (240 aa).

Residues glycine 110 and 129–134 contribute to the S-adenosyl-L-methionine site; that span reads LGDFVL.

The protein belongs to the RNA methyltransferase TrmD family. In terms of assembly, homodimer.

The protein localises to the cytoplasm. It carries out the reaction guanosine(37) in tRNA + S-adenosyl-L-methionine = N(1)-methylguanosine(37) in tRNA + S-adenosyl-L-homocysteine + H(+). Functionally, specifically methylates guanosine-37 in various tRNAs. The sequence is that of tRNA (guanine-N(1)-)-methyltransferase from Clostridium botulinum (strain ATCC 19397 / Type A).